Here is a 283-residue protein sequence, read N- to C-terminus: Foldase protein PrsA 3 (283 aa).

Positions 1–21 are cleaved as a signal peptide; the sequence is MKKKKLFLGTIISCVVLALSA. Cys-22 carries the N-palmitoyl cysteine lipid modification. Cys-22 carries the S-diacylglycerol cysteine lipid modification. One can recognise a PpiC domain in the interval 132 to 222; that stretch reads KPEMKVSHIL…YGYHIIKVTD (91 aa).

This sequence belongs to the PrsA family.

It is found in the cell membrane. It catalyses the reaction [protein]-peptidylproline (omega=180) = [protein]-peptidylproline (omega=0). Plays a major role in protein secretion by helping the post-translocational extracellular folding of several secreted proteins. Important for the secretion of the protective antigen. The three PsrA proteins in this organism show different but overlapping substrate specificities. This is Foldase protein PrsA 3 (prsA3) from Bacillus anthracis.